We begin with the raw amino-acid sequence, 305 residues long: Putative UDP-glucose 4-epimerase (305 aa).

NAD(+)-binding positions include 10 to 11 (FI), 30 to 35 (DNLTTG), 50 to 51 (DI), and 71 to 75 (QAAQI). Residues Ser115 and Tyr140 each coordinate substrate. 2 residues coordinate NAD(+): Tyr140 and Lys144. Tyr140 serves as the catalytic Proton acceptor. Substrate is bound by residues Asn169, 183 to 184 (VI), 198 to 200 (IIF), Arg207, and 263 to 266 (REGE).

This sequence belongs to the NAD(P)-dependent epimerase/dehydratase family. NAD(+) is required as a cofactor.

It catalyses the reaction UDP-alpha-D-glucose = UDP-alpha-D-galactose. It participates in carbohydrate metabolism; galactose metabolism. Its function is as follows. Involved in the metabolism of galactose. Catalyzes the conversion of UDP-galactose (UDP-Gal) to UDP-glucose (UDP-Glc) through a mechanism involving the transient reduction of NAD. The polypeptide is Putative UDP-glucose 4-epimerase (Methanocaldococcus jannaschii (strain ATCC 43067 / DSM 2661 / JAL-1 / JCM 10045 / NBRC 100440) (Methanococcus jannaschii)).